Consider the following 390-residue polypeptide: Alanine racemase (390 aa).

The Proton acceptor; specific for D-alanine role is filled by lysine 37. The residue at position 37 (lysine 37) is an N6-(pyridoxal phosphate)lysine. Substrate is bound at residue arginine 135. Tyrosine 274 functions as the Proton acceptor; specific for L-alanine in the catalytic mechanism. Residue methionine 322 participates in substrate binding.

Belongs to the alanine racemase family. Pyridoxal 5'-phosphate is required as a cofactor.

It carries out the reaction L-alanine = D-alanine. It functions in the pathway amino-acid biosynthesis; D-alanine biosynthesis; D-alanine from L-alanine: step 1/1. Functionally, catalyzes the interconversion of L-alanine and D-alanine. May also act on other amino acids. The protein is Alanine racemase (alr) of Desulfosudis oleivorans (strain DSM 6200 / JCM 39069 / Hxd3) (Desulfococcus oleovorans).